We begin with the raw amino-acid sequence, 468 residues long: ERO1-like protein alpha (468 aa).

The N-terminal stretch at M1–G23 is a signal peptide. 8 disulfide bridges follow: C35-C48, C37-C46, C85-C391, C94-C99, C94-C131, C99-C104, C208-C241, and C394-C397. S106, S143, and S145 each carry phosphoserine. Residues R187, T189, and W200 each coordinate FAD. FAD-binding residues include S252 and H255. The N-linked (GlcNAc...) asparagine glycan is linked to N280. The FAD site is built by R287 and R300. N384 carries N-linked (GlcNAc...) asparagine glycosylation.

This sequence belongs to the EROs family. In terms of assembly, predominantly monomer. May function both as a monomer and a homodimer. Interacts with PDILT. Interacts with ERP44; the interaction results in retention of ERO1A in the endoplasmic reticulum. Requires FAD as cofactor. In terms of processing, the Cys-94/Cys-99 and Cys-394/Cys-397 disulfide bonds constitute the redox-active center. The Cys-94/Cys-99 disulfide bond may accept electron from P4HB and funnel them to the active site disulfide Cys-394/Cys-397. The regulatory Cys-99/Cys-104 disulfide bond stabilizes the other regulatory bond Cys-94/Cys-131. Post-translationally, phosphorylated on Ser-145 by FAM20C in the Golgi which increases its enzymatic activity. Phosphorylation is induced by lactation. It is also induced by hypoxia and reductive stress.

It localises to the endoplasmic reticulum membrane. The protein resides in the golgi apparatus lumen. Its subcellular location is the secreted. It is found in the cell projection. The protein localises to the dendrite. With respect to regulation, enzyme activity is tightly regulated to prevent the accumulation of reactive oxygen species in the endoplasmic reticulum. Reversibly down-regulated by the formation of disulfide bonds between the active site Cys-94 and Cys-131, and between Cys-99 and Cys-104. Glutathione may be required to regulate its activity in the endoplasmic reticulum. Functionally, oxidoreductase involved in disulfide bond formation in the endoplasmic reticulum. Efficiently reoxidizes P4HB/PDI, the enzyme catalyzing protein disulfide formation, in order to allow P4HB to sustain additional rounds of disulfide formation. Following P4HB reoxidation, passes its electrons to molecular oxygen via FAD, leading to the production of reactive oxygen species (ROS) in the cell. Required for the proper folding of immunoglobulins. Plays an important role in ER stress-induced, CHOP-dependent apoptosis by activating the inositol 1,4,5-trisphosphate receptor IP3R1. This chain is ERO1-like protein alpha, found in Bos taurus (Bovine).